Here is a 144-residue protein sequence, read N- to C-terminus: Large ribosomal subunit protein uL15 (144 aa).

The disordered stretch occupies residues 1–53 (MRLNTLSPAEGAKHAPKRVGRGIGSGLGKTGGRGHKGQKSRSGGGVRRGFEGG). Gly residues predominate over residues 21–31 (RGIGSGLGKTG).

The protein belongs to the universal ribosomal protein uL15 family. As to quaternary structure, part of the 50S ribosomal subunit.

Its function is as follows. Binds to the 23S rRNA. The sequence is that of Large ribosomal subunit protein uL15 from Proteus mirabilis (strain HI4320).